A 210-amino-acid chain; its full sequence is Kinetochore protein Spc25 (210 aa).

Residues 42–106 (TMENIKRQQH…KKKQERDKLI (65 aa)) adopt a coiled-coil conformation.

This sequence belongs to the SPC25 family. As to quaternary structure, component of the Ndc80 complex, which is composed of Ndc80, Nuf2 and Spc25.

It is found in the nucleus. Its subcellular location is the chromosome. The protein localises to the centromere. It localises to the kinetochore. Its function is as follows. Acts as a component of the essential kinetochore-associated Ndc80 complex, which is required for chromosome segregation and spindle checkpoint activity during meiosis and mitosis. Required for kinetochore integrity and the organization of stable microtubule binding sites in the outer plate of the kinetochore. Participates in SAC signaling that responds specifically to disruptions in spindle microtubule dynamics. The NDC80 complex synergistically enhances the affinity of the SKA1 complex for microtubules and may allow the NDC80 complex to track depolymerizing microtubules. This is Kinetochore protein Spc25 from Drosophila virilis (Fruit fly).